The sequence spans 317 residues: Transcriptional regulator LsrR (317 aa).

Positions 33-56 (QSEISDRLGLTRLKVSRLLEKGHQ) form a DNA-binding region, H-T-H motif.

The protein belongs to the SorC transcriptional regulatory family.

The protein localises to the cytoplasm. Its activity is regulated as follows. Inactivated by phosphorylated autoinducer-2 (phospho-AI-2). Phospho-AI-2 acts by binding to LsrR, which is then unable to bind to the promoter regions, allowing the transcription of the target genes. In terms of biological role, transcriptional regulator that represses the expression of the lsr operon in the absence of the quorum-sensing signaling molecule autoinducer 2 (AI-2). It also represses the expression of the lsrRK operon. Acts by binding directly to the lsrA and lsrR promoter regions. In the presence of phosphorylated autoinducer-2 (phospho-AI-2), LsrR is inactivated, leading to the transcription of the genes. The protein is Transcriptional regulator LsrR (lsrR) of Escherichia coli O139:H28 (strain E24377A / ETEC).